The following is a 276-amino-acid chain: NADPH-dependent 7-cyano-7-deazaguanine reductase (276 aa).

83-85 (IES) provides a ligand contact to substrate. 85 to 86 (SK) provides a ligand contact to NADPH. C184 functions as the Thioimide intermediate in the catalytic mechanism. D191 serves as the catalytic Proton donor. 223 to 224 (HE) serves as a coordination point for substrate. Residue 252–253 (RG) coordinates NADPH.

This sequence belongs to the GTP cyclohydrolase I family. QueF type 2 subfamily. As to quaternary structure, homodimer.

It is found in the cytoplasm. The enzyme catalyses 7-aminomethyl-7-carbaguanine + 2 NADP(+) = 7-cyano-7-deazaguanine + 2 NADPH + 3 H(+). It functions in the pathway tRNA modification; tRNA-queuosine biosynthesis. Its function is as follows. Catalyzes the NADPH-dependent reduction of 7-cyano-7-deazaguanine (preQ0) to 7-aminomethyl-7-deazaguanine (preQ1). The polypeptide is NADPH-dependent 7-cyano-7-deazaguanine reductase (Pseudomonas fluorescens (strain ATCC BAA-477 / NRRL B-23932 / Pf-5)).